The sequence spans 949 residues: Phosphocholine transferase AnkX (949 aa).

The Fido domain occupies Leu155–Gln289. ANK repeat units lie at residues Val391 to Leu420, Asp424 to Asp453, His464 to Glu494, Ser498 to Asp527, Leu554 to Ile583, Asp588 to Leu617, Asn658 to Phe687, Leu691 to His720, Glu725 to Lys767, and Lys771 to Ile800.

It is found in the secreted. It localises to the host cytoplasm. The catalysed reaction is [Rab1 protein]-L-serine + CDP-choline = [Rab1 protein]-O-phosphocholine-L-serine + CMP + H(+). Virulence effector that plays a role in hijacking the host vesicular trafficking by recruiting the small guanosine triphosphatase (GTPase) Rab1 to the cytosolic face of the Legionella-containing vacuole (LCVs). Acts as a phosphocholine transferase by mediating the addition of phosphocholine to Ser residues of host RAB1 (RAB1A, RAB1B or RAB1C) and RAB35, leading to displacement of GDP dissociation inhibitors (GDI). Phosphocholination of target proteins also impairs accessibility to GTPase effector LepB. Can act on both GDP-bound and GTP-bound Rab proteins. This Legionella pneumophila subsp. pneumophila (strain Philadelphia 1 / ATCC 33152 / DSM 7513) protein is Phosphocholine transferase AnkX (ankX).